We begin with the raw amino-acid sequence, 590 residues long: Putative ABC transporter ATP-binding protein MM_3016 (590 aa).

ABC transporter domains lie at 11–251 and 317–550; these read VRFE…KLGI and VRIE…AGLI. ATP is bound by residues 45 to 52 and 350 to 357; these read GPSGCGKS and GHNGAGKT.

This sequence belongs to the ABC transporter superfamily.

It localises to the cell membrane. Its function is as follows. Probably part of an ABC transporter complex. Responsible for energy coupling to the transport system. This Methanosarcina mazei (strain ATCC BAA-159 / DSM 3647 / Goe1 / Go1 / JCM 11833 / OCM 88) (Methanosarcina frisia) protein is Putative ABC transporter ATP-binding protein MM_3016.